A 284-amino-acid polypeptide reads, in one-letter code: MALGDLLSRSSPDQLTRFLAQVHGHPKKGLSQNFLIDGNILRKILAVSCVEAGDWVLEIGPGFGALTEVLVNQGAHVVALEKDPMFEETLKQLPIDLEITDACKYPLSQLQEKGWQGKGRVVANLPYHITTPLLTKLFLEVPNQWKTITVMMQDEVARRITAQPGGKEYGSLTIFLQFFADVRYAFKVSSGCFFPKPQVSSAVVHMTVKDTFPLEESLHKKFFSLTRAAFGQRRKLLANALKNLYPKDLVFSALNQLNFSEKTRPETLSLDEYLKLFQLLSLNS.

6 residues coordinate S-adenosyl-L-methionine: Asn-33, Leu-35, Gly-60, Glu-81, Asp-101, and Asn-124.

The protein belongs to the class I-like SAM-binding methyltransferase superfamily. rRNA adenine N(6)-methyltransferase family. RsmA subfamily.

The protein localises to the cytoplasm. It catalyses the reaction adenosine(1518)/adenosine(1519) in 16S rRNA + 4 S-adenosyl-L-methionine = N(6)-dimethyladenosine(1518)/N(6)-dimethyladenosine(1519) in 16S rRNA + 4 S-adenosyl-L-homocysteine + 4 H(+). Its function is as follows. Specifically dimethylates two adjacent adenosines (A1518 and A1519) in the loop of a conserved hairpin near the 3'-end of 16S rRNA in the 30S particle. May play a critical role in biogenesis of 30S subunits. This Chlamydia felis (strain Fe/C-56) (Chlamydophila felis) protein is Ribosomal RNA small subunit methyltransferase A.